Here is a 237-residue protein sequence, read N- to C-terminus: Photosystem I-associated linker protein CpcL (237 aa).

Positions 11–191 (TTQNQRVQSF…DYRDRAGIVR (181 aa)) constitute a PBS-linker domain. The chain crosses the membrane as a helical span at residues 208-228 (GVAILGVLLAISAGMTFLFVL).

The protein belongs to the phycobilisome linker protein family. As to quaternary structure, part of a specialized phycobilisome (PBS), a structure that is usually composed of two distinct substructures: a core complex and a number of rods radiating from the core. This protein is part of a core-less PBS rod (called CpcL-PBS). In vegetative cells associated substoichiometrically with photosystem I and phycobiliproteins phycocyanin as well as phycoerythrocyanin in the thylakoid membrane, not found in conventional, hemidiscoidal phycobilisomes.

The protein localises to the cellular thylakoid membrane. Its function is as follows. Rod linker protein, associated with phycocyanin (PC). Linker polypeptides determine the state of aggregation and the location of the disk-shaped phycobiliprotein units within the phycobilisome (PBS) and modulate their spectroscopic properties in order to mediate a directed and optimal energy transfer. Forms a supercomplex with tetrameric photosystem I (PSI) and PC that allows efficient energy transfer from PC to PSI. This protein seems to be in the middle of the PC hexameric rod and may anchor the PC rods at the periphery of PSI tetramers. May be involved in the cyclic electron transport around PSI that provides ATP needed for N(2) fixation in heterocysts. The protein is Photosystem I-associated linker protein CpcL of Nostoc sp. (strain PCC 7120 / SAG 25.82 / UTEX 2576).